We begin with the raw amino-acid sequence, 354 residues long: MRTVHDDELKKILKIMSPGTSLREGLDNILRAKTGGLIVLGDNEEILDLVDGGFNINSEYSPAYIYELAKMDGALVLTSDRKRILYANAQLMPNQSISTFETGTRHRTAQRVAKQTNKIAIAISQRRNIITVYKGDIKYVLRDSAVILSKANQAIQTLEKYVAVLERVTNNLNILEFQDLATLFDVTTAIQRTEMVMRIVEEIEGYIIELGNEGRLISMQLNELVRSIEQDGVLLIRDYCYDKMEYNDVYKEIQELSAEDLLDLDIIAKELGYVGKSLIDTLVSPRGYRISNKVPRIPSNVIENLVGHFGKLKYILEAGNEELDQVEGIGEARARAIKNGLRRIREQVALNKNL.

Residues 6 to 144 enclose the DAC domain; sequence DDELKKILKI…GDIKYVLRDS (139 aa). ATP-binding positions include Gly-73, Leu-91, and 104 to 108; that span reads TRHRT.

This sequence belongs to the DisA family. As to quaternary structure, homooctamer. Mg(2+) is required as a cofactor.

The catalysed reaction is 2 ATP = 3',3'-c-di-AMP + 2 diphosphate. Functionally, participates in a DNA-damage check-point that is active prior to asymmetric division when DNA is damaged. DisA forms globular foci that rapidly scan along the chromosomes during sporulation, searching for lesions. When a lesion is present, DisA pauses at the lesion site. This triggers a cellular response that culminates in a temporary block in sporulation initiation. Its function is as follows. Also has diadenylate cyclase activity, catalyzing the condensation of 2 ATP molecules into cyclic di-AMP (c-di-AMP). c-di-AMP acts as a signaling molecule that couples DNA integrity with progression of sporulation. The rise in c-di-AMP level generated by DisA while scanning the chromosome, operates as a positive signal that advances sporulation; upon encountering a lesion, the DisA focus arrests at the damaged site and halts c-di-AMP synthesis. The protein is DNA integrity scanning protein DisA of Clostridium perfringens (strain 13 / Type A).